Reading from the N-terminus, the 612-residue chain is uncharacterized protein (612 aa).

Residues 39-100 adopt a coiled-coil conformation; the sequence is ERDHNLWEIE…KNISVKDLDE (62 aa). Positions 219–241 are disordered; that stretch reads PLSSGESLPKKEEEVTKSPSFTL. WD repeat units follow at residues 286–325, 337–376, 389–432, 434–470, 483–523, 526–565, and 574–612; these read TSTQCITHQPLPGSTPSFASGTENGVINVWRLDEDSNDNS, GHEGPVLCVCVPKATHHIFSGGHDGTIRCWSLPANQTSDS, GHED…FKIR, DSKQPLSMSVTDSRIAIAYNDGNVRFYDLDTQILVSQ, AVKD…LLAE, ISKVSLTGIAFAVNRPEFAISASDGRVFFLRQDDKLSTLE, and EEITDLSDILWINSPVDKLEHLIVGCKERISVYDRKYLP.

Its subcellular location is the cytoplasm. This is an uncharacterized protein from Schizosaccharomyces pombe (strain 972 / ATCC 24843) (Fission yeast).